Here is a 266-residue protein sequence, read N- to C-terminus: Succinate dehydrogenase [ubiquinone] iron-sulfur subunit, mitochondrial (266 aa).

Residues 1–20 (MLNVLLRRKAFCLVTKKGMA) constitute a mitochondrion transit peptide. One can recognise a 2Fe-2S ferredoxin-type domain in the interval 36-127 (FKVYRWNPDE…QLKIYPLPHM (92 aa)). Residues Cys87, Cys92, Cys95, and Cys107 each coordinate [2Fe-2S] cluster. The 31-residue stretch at 169-199 (DRKKLDGLYECILCACCSTSCPSYWWNQEQY) folds into the 4Fe-4S ferredoxin-type domain. Residues Cys179, Cys182, and Cys185 each contribute to the [4Fe-4S] cluster site. Cys189 serves as a coordination point for [3Fe-4S] cluster. A ubiquinone is bound at residue Trp194. Cys236 and Cys242 together coordinate [3Fe-4S] cluster. Cys246 is a [4Fe-4S] cluster binding site.

This sequence belongs to the succinate dehydrogenase/fumarate reductase iron-sulfur protein family. As to quaternary structure, component of complex II composed of four subunits: a flavoprotein (FP), an iron-sulfur protein (IP), and a cytochrome b composed of a large and a small subunit. The cofactor is [2Fe-2S] cluster. [3Fe-4S] cluster is required as a cofactor. Requires [4Fe-4S] cluster as cofactor.

It localises to the mitochondrion inner membrane. The catalysed reaction is a quinone + succinate = fumarate + a quinol. The protein operates within carbohydrate metabolism; tricarboxylic acid cycle; fumarate from succinate (eukaryal route): step 1/1. Its function is as follows. Subunit of succinate dehydrogenase (SDH) that is involved in complex II of the mitochondrial electron transport chain and is responsible for transferring electrons from succinate to ubiquinone (coenzyme Q). SDH1 and SDH2 form the catalytic dimer. Electrons flow from succinate to the FAD bound to SDH1, and sequentially through the iron-sulfur clusters bound to SDH2 and enter the membrane dimer formed by SDH3 and SDH4. The polypeptide is Succinate dehydrogenase [ubiquinone] iron-sulfur subunit, mitochondrial (SDH2) (Saccharomyces cerevisiae (strain ATCC 204508 / S288c) (Baker's yeast)).